We begin with the raw amino-acid sequence, 442 residues long: Serine--tRNA ligase (442 aa).

249-251 (TSE) is a binding site for L-serine. ATP is bound at residue 280-282 (RSE). Residue Glu-303 participates in L-serine binding. Position 367 to 370 (367 to 370 (EISS)) interacts with ATP. Residue Ser-402 coordinates L-serine.

This sequence belongs to the class-II aminoacyl-tRNA synthetase family. Type-1 seryl-tRNA synthetase subfamily. In terms of assembly, homodimer. The tRNA molecule binds across the dimer.

It is found in the cytoplasm. It catalyses the reaction tRNA(Ser) + L-serine + ATP = L-seryl-tRNA(Ser) + AMP + diphosphate + H(+). It carries out the reaction tRNA(Sec) + L-serine + ATP = L-seryl-tRNA(Sec) + AMP + diphosphate + H(+). Its pathway is aminoacyl-tRNA biosynthesis; selenocysteinyl-tRNA(Sec) biosynthesis; L-seryl-tRNA(Sec) from L-serine and tRNA(Sec): step 1/1. Functionally, catalyzes the attachment of serine to tRNA(Ser). Is also able to aminoacylate tRNA(Sec) with serine, to form the misacylated tRNA L-seryl-tRNA(Sec), which will be further converted into selenocysteinyl-tRNA(Sec). The chain is Serine--tRNA ligase from Acidovorax sp. (strain JS42).